The primary structure comprises 293 residues: Protoheme IX farnesyltransferase (293 aa).

Helical transmembrane passes span 9 to 29 (LIKP…FLLA), 38 to 58 (YIIL…SCVL), 86 to 106 (FVKN…LFLG), 111 to 131 (LLTI…YSLW), 137 to 157 (IYST…GYCT), 167 to 187 (WLLF…ITIF), 211 to 231 (IHMI…TVLG), 234 to 254 (SYTF…TGWY), and 271 to 291 (ILSI…SIFI).

The protein belongs to the UbiA prenyltransferase family. Protoheme IX farnesyltransferase subfamily.

Its subcellular location is the cell inner membrane. The catalysed reaction is heme b + (2E,6E)-farnesyl diphosphate + H2O = Fe(II)-heme o + diphosphate. Its pathway is porphyrin-containing compound metabolism; heme O biosynthesis; heme O from protoheme: step 1/1. Its function is as follows. Converts heme B (protoheme IX) to heme O by substitution of the vinyl group on carbon 2 of heme B porphyrin ring with a hydroxyethyl farnesyl side group. This chain is Protoheme IX farnesyltransferase, found in Blochmanniella floridana.